Consider the following 84-residue polypeptide: uncharacterized protein (84 aa).

The chain crosses the membrane as a helical span at residues A10–H32.

The protein localises to the membrane. This is an uncharacterized protein from Saccharomyces cerevisiae (strain ATCC 204508 / S288c) (Baker's yeast).